The chain runs to 1002 residues: Collagen alpha-2(I) chain (1002 aa).

The segment at 1–1002 (SGGFDFSFLP…PGPPGPPGAS (1002 aa)) is disordered. A 4-hydroxyproline mark is found at P10, P13, P28, and P34. The span at 17 to 60 (GPMGLMGPRGPPGASGAPGPQGFQGPAGEPGEPGQTGPAGARGP) shows a compositional bias: low complexity. K89 bears the 5-hydroxylysine; alternate mark. K89 carries O-linked (Gal...) hydroxylysine; alternate glycosylation. 2 stretches are compositionally biased toward low complexity: residues 145-166 (SRGSDGSVGPVGPAGPIGSAGP) and 211-232 (PGANGLTGAKGAAGLPGVAGAP). The segment covering 266-275 (GESGGKGEPG) has biased composition (gly residues). Over residues 276–286 (SAGPQGPPGSS) the composition is skewed to low complexity. Gly residues predominate over residues 308-317 (GLRGGPGSRG). Over residues 330 to 346 (PAGARGASGPAGVRGPS) the composition is skewed to low complexity. 2 positions are modified to 4-hydroxyproline: P352 and P355. Residues 381–400 (LPGIDGRPGPIGPAGARGEA) show a composition bias toward low complexity. A compositionally biased stretch (gly residues) spans 449–458 (GVQGGKGEQG). Composition is skewed to low complexity over residues 505–522 (PGESGAVGPSGAIGSRGP) and 534–544 (EPGVVGAPGTA). The span at 545–554 (GPAGSGGLPG) shows a compositional bias: gly residues. 2 stretches are compositionally biased toward low complexity: residues 577 to 621 (VGTT…PRGS) and 628 to 648 (VGPAGPNGFAGPAGAAGQPGA). Basic and acidic residues predominate over residues 649–658 (KGERGTKGPK). Positions 666–676 (PTGPVGSAGPA) are enriched in low complexity. Gly residues predominate over residues 686-695 (GSRGDGGPPG). Residues 697–706 (TGFPGAAGRT) are compositionally biased toward low complexity. Residues 743–752 (GETGAGGPPG) show a composition bias toward gly residues. 2 stretches are compositionally biased toward low complexity: residues 760–787 (SGEPGTAGPPGTAGPQGLLGAPGILGLP) and 795–805 (LPGVAGAVGEP). Residues 806–828 (GPLGIGPPGARGPSGGVGPGVNG) show a composition bias toward gly residues. A compositionally biased stretch (basic and acidic residues) spans 833 to 851 (AGRDGPPGRDGLPGHKGER). The segment covering 853–898 (YAGNAGPVGAAGAPGPHGAVGPAGKHGNRGEPGPVGSAGPVGALGP) has biased composition (low complexity). The span at 908–919 (RGDKGEAGDKGP) shows a compositional bias: basic and acidic residues. Residues 987–1002 (SGPPGPPGPPGPPGAS) show a composition bias toward pro residues.

The protein belongs to the fibrillar collagen family. As to quaternary structure, trimers of one alpha 2(I) and two alpha 1(I) chains. Interacts (via C-terminus) with TMEM131 (via PapD-L domain); the interaction is direct and is involved in assembly and TRAPPIII ER-to-Golgi transport complex-dependent secretion of collagen. Post-translationally, prolines at the third position of the tripeptide repeating unit (G-X-Y) are hydroxylated in some or all of the chains. In terms of tissue distribution, expressed in bones.

Its subcellular location is the secreted. The protein localises to the extracellular space. The protein resides in the extracellular matrix. Its function is as follows. Type I collagen is a member of group I collagen (fibrillar forming collagen). The sequence is that of Collagen alpha-2(I) chain from Glossotherium robustum (Ground sloth).